Consider the following 542-residue polypeptide: MLO-like protein 7 (542 aa).

The Extracellular segment spans residues 1–38; sequence MITRSRCRRSLLWFLVFHGGATATGAPSGGKELSQTPT. A helical membrane pass occupies residues 39–59; it reads WAVAVVCTFLILISHLLEKGL. Residues 60–82 lie on the Cytoplasmic side of the membrane; sequence QRLANWLWKKHKNSLLEALEKIK. Residues 83–103 form a helical membrane-spanning segment; the sequence is AELMILGFISLLLTFGEPYIL. At 104-165 the chain is on the extracellular side; it reads KICVPRKAAL…ITLKGLHQLH (62 aa). Residues 166–186 traverse the membrane as a helical segment; it reads ILLFFLAIFHIVYSLITMMLS. The Cytoplasmic portion of the chain corresponds to 187–288; sequence RLKIRGWKKW…IKRSLEDDFK (102 aa). Residues 289–309 form a helical membrane-spanning segment; sequence LVVGISPVLWASFVIFLLFNV. At 310 to 315 the chain is on the extracellular side; sequence NGWRTL. A helical membrane pass occupies residues 316-336; sequence FWASIPPLLIILAVGTKLQAI. At 337 to 374 the chain is on the cytoplasmic side; it reads MATMALEIVETHAVVQGMPLVQGSDRYFWFDCPQLLLH. A helical transmembrane segment spans residues 375–395; sequence LIHFALFQNAFQITHFFWIWY. Residues 396-414 lie on the Extracellular side of the membrane; sequence SFGLKSCFHKDFNLVVSKL. A helical transmembrane segment spans residues 415–435; it reads FLCLGALILCSYITLPLYALV. Over 436 to 542 the chain is Cytoplasmic; it reads TQMGSHMKKA…QQQEMQFHNS (107 aa). Residues 449–470 form a calmodulin-binding region; sequence EQMAKALKKWHKDIKLKKGKAR.

Belongs to the MLO family. In terms of tissue distribution, restricted to pollen, synergids, pistils and immature anthers. Also detected in seedlings, leaves, stems and inflorescens.

It localises to the cell membrane. It is found in the endomembrane system. In terms of biological role, may be involved in modulation of pathogen defense and leaf cell death. Activity seems to be regulated by Ca(2+)-dependent calmodulin binding and seems not to require heterotrimeric G proteins. Controls pollen tube reception in the female gametophyte synergids. The sequence is that of MLO-like protein 7 (MLO7) from Arabidopsis thaliana (Mouse-ear cress).